A 395-amino-acid chain; its full sequence is S-adenosylmethionine synthase (395 aa).

Mg(2+) is bound at residue E10. H16 lines the ATP pocket. E44 serves as a coordination point for K(+). L-methionine is bound by residues E57 and Q100. ATP contacts are provided by residues D168–K170, S236–F239, R253–K254, A270, K274, and K278. Position 278 (K278) interacts with L-methionine.

The protein belongs to the AdoMet synthase family. In terms of assembly, homotetramer. The cofactor is Mn(2+). Mg(2+) is required as a cofactor. It depends on Co(2+) as a cofactor. K(+) serves as cofactor.

The protein resides in the cytoplasm. It carries out the reaction L-methionine + ATP + H2O = S-adenosyl-L-methionine + phosphate + diphosphate. It participates in amino-acid biosynthesis; S-adenosyl-L-methionine biosynthesis; S-adenosyl-L-methionine from L-methionine: step 1/1. In terms of biological role, catalyzes the formation of S-adenosylmethionine from methionine and ATP. The reaction comprises two steps that are both catalyzed by the same enzyme: formation of S-adenosylmethionine (AdoMet) and triphosphate, and subsequent hydrolysis of the triphosphate. This Populus deltoides (Eastern poplar) protein is S-adenosylmethionine synthase (METK).